A 736-amino-acid chain; its full sequence is 1,4-alpha-glucan branching enzyme GlgB (736 aa).

Residue D417 is the Nucleophile of the active site. The Proton donor role is filled by E470.

It belongs to the glycosyl hydrolase 13 family. GlgB subfamily. Monomer.

It catalyses the reaction Transfers a segment of a (1-&gt;4)-alpha-D-glucan chain to a primary hydroxy group in a similar glucan chain.. The protein operates within glycan biosynthesis; glycogen biosynthesis. In terms of biological role, catalyzes the formation of the alpha-1,6-glucosidic linkages in glycogen by scission of a 1,4-alpha-linked oligosaccharide from growing alpha-1,4-glucan chains and the subsequent attachment of the oligosaccharide to the alpha-1,6 position. This chain is 1,4-alpha-glucan branching enzyme GlgB, found in Pseudomonas putida (strain ATCC 47054 / DSM 6125 / CFBP 8728 / NCIMB 11950 / KT2440).